A 524-amino-acid polypeptide reads, in one-letter code: Origin of replication complex subunit 5 (524 aa).

Over residues 1–19 (MSQPVTPRRTTRSSASASP) the composition is skewed to low complexity. Positions 1–56 (MSQPVTPRRTTRSSASASPSPAPASPTSPPKSRPKPSPRRQLLAAAAAPPKEDGSS) are disordered. Residues 20–31 (SPAPASPTSPPK) show a composition bias toward pro residues. Low complexity predominate over residues 39-49 (RRQLLAAAAAP). Residue 90–97 (GGAATGKT) coordinates ATP.

It belongs to the ORC5 family. In terms of assembly, component of the origin recognition complex (ORC) composed of at least ORC1, ORC2, ORC3, ORC4, ORC5 and ORC6. ORC is regulated in a cell-cycle and development dependent manner. It is sequentially assembled at the exit from anaphase of mitosis and disassembled as cells enter S phase.

Its subcellular location is the nucleus. Component of the origin recognition complex (ORC) that binds origins of replication. DNA-binding is ATP-dependent. The specific DNA sequences that define origins of replication have not been identified yet. ORC is required to assemble the pre-replication complex necessary to initiate DNA replication. In Oryza sativa subsp. indica (Rice), this protein is Origin of replication complex subunit 5.